The primary structure comprises 375 residues: Aminomethyltransferase (375 aa).

This sequence belongs to the GcvT family. In terms of assembly, the glycine cleavage system is composed of four proteins: P, T, L and H.

The catalysed reaction is N(6)-[(R)-S(8)-aminomethyldihydrolipoyl]-L-lysyl-[protein] + (6S)-5,6,7,8-tetrahydrofolate = N(6)-[(R)-dihydrolipoyl]-L-lysyl-[protein] + (6R)-5,10-methylene-5,6,7,8-tetrahydrofolate + NH4(+). The glycine cleavage system catalyzes the degradation of glycine. The protein is Aminomethyltransferase of Symbiobacterium thermophilum (strain DSM 24528 / JCM 14929 / IAM 14863 / T).